The chain runs to 1357 residues: DNA-directed RNA polymerase subunit beta (1357 aa).

Belongs to the RNA polymerase beta chain family. As to quaternary structure, the RNAP catalytic core consists of 2 alpha, 1 beta, 1 beta' and 1 omega subunit. When a sigma factor is associated with the core the holoenzyme is formed, which can initiate transcription.

The catalysed reaction is RNA(n) + a ribonucleoside 5'-triphosphate = RNA(n+1) + diphosphate. DNA-dependent RNA polymerase catalyzes the transcription of DNA into RNA using the four ribonucleoside triphosphates as substrates. This Pseudomonas putida (strain GB-1) protein is DNA-directed RNA polymerase subunit beta.